A 328-amino-acid chain; its full sequence is NADH:quinone reductase (328 aa).

FMN-binding positions include 22-24 (GMQ), Thr-75, Lys-124, Ala-150, 178-180 (SGG), and 201-202 (GT).

This sequence belongs to the nitronate monooxygenase family. In terms of assembly, monomer. FMN serves as cofactor.

The enzyme catalyses a quinone + NADH + H(+) = a quinol + NAD(+). In terms of biological role, catalyzes the NADH-dependent reduction of a broad spectrum of quinone substrates, generating the corresponding hydroquinones. Highly prefers NADH to NADPH as a reducing substrate. Also displays a small NADH oxidase activity. Does not exhibit nitronate monooxygenase activity; is inactive against propionate 3-nitronate, 3-nitropropionate, nitroethane, 1-nitropropane, 2-nitropropane, and the anionic forms ethylnitronate, propyl-1-nitronate, and propyl-2-nitronate. Has no azoreductase activity since it is not able to reduce the azo dye methyl red with NADH. May be required to maintain an appropriate [NAD(+)]/[NADH] ratio for the catabolism of fatty acids in P.aeruginosa PAO1. The sequence is that of NADH:quinone reductase from Pseudomonas aeruginosa (strain ATCC 15692 / DSM 22644 / CIP 104116 / JCM 14847 / LMG 12228 / 1C / PRS 101 / PAO1).